Here is a 457-residue protein sequence, read N- to C-terminus: tRNA modification GTPase MnmE (457 aa).

(6S)-5-formyl-5,6,7,8-tetrahydrofolate-binding residues include Arg22, Glu83, and Arg122. One can recognise a TrmE-type G domain in the interval 219-378 (GLATAIIGRP…LEEAIKALFF (160 aa)). Asn229 provides a ligand contact to K(+). GTP is bound by residues 229–234 (NVGKSS), 248–254 (TDIAGTT), and 273–276 (DTAG). Position 233 (Ser233) interacts with Mg(2+). K(+) is bound by residues Thr248, Ile250, and Thr253. Thr254 provides a ligand contact to Mg(2+). Lys457 lines the (6S)-5-formyl-5,6,7,8-tetrahydrofolate pocket.

Belongs to the TRAFAC class TrmE-Era-EngA-EngB-Septin-like GTPase superfamily. TrmE GTPase family. As to quaternary structure, homodimer. Heterotetramer of two MnmE and two MnmG subunits. It depends on K(+) as a cofactor.

The protein resides in the cytoplasm. In terms of biological role, exhibits a very high intrinsic GTPase hydrolysis rate. Involved in the addition of a carboxymethylaminomethyl (cmnm) group at the wobble position (U34) of certain tRNAs, forming tRNA-cmnm(5)s(2)U34. The chain is tRNA modification GTPase MnmE from Listeria innocua serovar 6a (strain ATCC BAA-680 / CLIP 11262).